Reading from the N-terminus, the 352-residue chain is Ion-translocating oxidoreductase complex subunit D (352 aa).

Helical transmembrane passes span 20–40 (IMLL…WFFG), 42–62 (GTLV…ALVL), 78–109 (ALLT…VIIA), 123–143 (PAMI…TSWL), and 148–168 (IAVN…GHTA). T187 bears the FMN phosphoryl threonine mark. Helical transmembrane passes span 214 to 234 (ILAG…GVWL), 242 to 262 (WHIP…GWLF), 267 to 287 (LAAP…FFIL), 301 to 321 (LIFG…GGYP), and 322 to 342 (DGVA…DYYT).

This sequence belongs to the NqrB/RnfD family. The complex is composed of six subunits: RsxA, RsxB, RsxC, RsxD, RsxE and RsxG. The cofactor is FMN.

It localises to the cell inner membrane. In terms of biological role, part of a membrane-bound complex that couples electron transfer with translocation of ions across the membrane. Required to maintain the reduced state of SoxR. This chain is Ion-translocating oxidoreductase complex subunit D, found in Escherichia coli O157:H7.